The primary structure comprises 107 residues: U1-lycotoxin-Ls1v (107 aa).

Positions 1 to 20 are cleaved as a signal peptide; the sequence is MMKVLVVVALLVTLISYSSS. The propeptide occupies 21–41; the sequence is EGIDDLEADELLSLTANEQTR. 4 disulfide bridges follow: Cys-44–Cys-59, Cys-51–Cys-68, Cys-58–Cys-86, and Cys-70–Cys-84.

The protein belongs to the neurotoxin 19 (CSTX) family. 04 (U1-Lctx) subfamily. Expressed by the venom gland.

Its subcellular location is the secreted. This chain is U1-lycotoxin-Ls1v, found in Lycosa singoriensis (Wolf spider).